Here is a 218-residue protein sequence, read N- to C-terminus: 7-cyano-7-deazaguanine synthase (218 aa).

10 to 20 (FSGGQDSTTCL) contributes to the ATP binding site. The Zn(2+) site is built by Cys186, Cys195, Cys198, and Cys201.

It belongs to the QueC family. Homodimer. Zn(2+) is required as a cofactor.

It catalyses the reaction 7-carboxy-7-deazaguanine + NH4(+) + ATP = 7-cyano-7-deazaguanine + ADP + phosphate + H2O + H(+). Its pathway is purine metabolism; 7-cyano-7-deazaguanine biosynthesis. Catalyzes the ATP-dependent conversion of 7-carboxy-7-deazaguanine (CDG) to 7-cyano-7-deazaguanine (preQ(0)). This is 7-cyano-7-deazaguanine synthase from Exiguobacterium sibiricum (strain DSM 17290 / CCUG 55495 / CIP 109462 / JCM 13490 / 255-15).